The following is an 809-amino-acid chain: Ecotropic viral integration site 5 protein (809 aa).

The interval 1–483 (MVTTKMTAAF…EAESQCALKE (483 aa)) is interaction with alpha-tubulin, gamma-tubulin, BIRC5 and FBXO5. 2 disordered regions span residues 49-80 (VASPSASLHTTSSSTTLSTPTQSPSSPSKLSP) and 99-123 (DSKSLRSVNGSRRNSGSSLVSSSSA). The span at 51–78 (SPSASLHTTSSSTTLSTPTQSPSSPSKL) shows a compositional bias: low complexity. A phosphoserine mark is found at S102 and S113. Over residues 103 to 123 (LRSVNGSRRNSGSSLVSSSSA) the composition is skewed to low complexity. A dimerization region spans residues 128–693 (SHLEEDSWIL…LNRSDSNQYI (566 aa)). In terms of domain architecture, Rab-GAP TBC spans 163–348 (GIPHHFRAIV…RIFDIFMSEG (186 aa)). The interval 377–809 (QHFQKVIPHQ…PQRESYSTTV (433 aa)) is targeting to the centrosomes. The stretch at 406–717 (KKMKKLEKEY…RCLKGQRDFS (312 aa)) forms a coiled coil. An interaction with AURKB and INCENP region spans residues 487–809 (KVLDIEKKNN…PQRESYSTTV (323 aa)). Phosphoserine is present on residues S497, S689, S776, and S778. The segment at 760 to 809 (HRKSGPMSLNPALADGSESEAEDGMLGPQESDPEAPQKQPPQRESYSTTV) is disordered. Over residues 799-809 (PPQRESYSTTV) the composition is skewed to polar residues.

In terms of assembly, dimeric and monomeric. Interacts with alpha- and gamma-tubulin. Interacts with FBXO5. Interacts with the chromosome passenger complex (CPC) which is at least composed of AURKB/aurora-B, BIRC5/survivin, CDCA8/borealin and INCENP. Probably phosphorylated by PLK1; may be required for degradation during mitosis. In terms of processing, ubiquitinated. Degradation during prophase is ubiquitin-dependent. Widely expressed.

The protein localises to the nucleus. It localises to the cytoplasm. Its subcellular location is the cytoskeleton. It is found in the microtubule organizing center. The protein resides in the centrosome. The protein localises to the spindle. Functionally, functions as a regulator of cell cycle progression by stabilizing the FBXO5 protein and promoting cyclin-A accumulation during interphase. May play a role in cytokinesis. The protein is Ecotropic viral integration site 5 protein (Evi5) of Mus musculus (Mouse).